The primary structure comprises 96 residues: Probable quinol oxidase subunit 4 (96 aa).

The next 3 membrane-spanning stretches (helical) occupy residues 8-28 (TVGF…TLYT), 36-56 (LTII…MFMH), and 68-88 (FKVI…YWVM).

Belongs to the cytochrome c oxidase bacterial subunit 4 family.

The protein localises to the cell membrane. It catalyses the reaction 2 a quinol + O2 = 2 a quinone + 2 H2O. In terms of biological role, catalyzes quinol oxidation with the concomitant reduction of oxygen to water. This chain is Probable quinol oxidase subunit 4 (qoxD), found in Staphylococcus aureus (strain USA300).